Reading from the N-terminus, the 103-residue chain is Small ribosomal subunit protein uS10 (103 aa).

This sequence belongs to the universal ribosomal protein uS10 family. In terms of assembly, part of the 30S ribosomal subunit.

Its function is as follows. Involved in the binding of tRNA to the ribosomes. The protein is Small ribosomal subunit protein uS10 of Acinetobacter baumannii (strain AB307-0294).